The primary structure comprises 271 residues: Putative pyruvate, phosphate dikinase regulatory protein 1 (271 aa).

156–163 provides a ligand contact to ADP; that stretch reads GVSRTSKT.

This sequence belongs to the pyruvate, phosphate/water dikinase regulatory protein family. PDRP subfamily.

It catalyses the reaction N(tele)-phospho-L-histidyl/L-threonyl-[pyruvate, phosphate dikinase] + ADP = N(tele)-phospho-L-histidyl/O-phospho-L-threonyl-[pyruvate, phosphate dikinase] + AMP + H(+). The catalysed reaction is N(tele)-phospho-L-histidyl/O-phospho-L-threonyl-[pyruvate, phosphate dikinase] + phosphate + H(+) = N(tele)-phospho-L-histidyl/L-threonyl-[pyruvate, phosphate dikinase] + diphosphate. In terms of biological role, bifunctional serine/threonine kinase and phosphorylase involved in the regulation of the pyruvate, phosphate dikinase (PPDK) by catalyzing its phosphorylation/dephosphorylation. In Staphylococcus saprophyticus subsp. saprophyticus (strain ATCC 15305 / DSM 20229 / NCIMB 8711 / NCTC 7292 / S-41), this protein is Putative pyruvate, phosphate dikinase regulatory protein 1.